The following is a 548-amino-acid chain: Natural resistance-associated macrophage protein 1 (548 aa).

The segment at 1–38 (MSGDTGPPKQGGTRYGSISSPPSPEPQQAPPGGTYLSE) is disordered. Topologically, residues 1–55 (MSGDTGPPKQGGTRYGSISSPPSPEPQQAPPGGTYLSEKIPIPDTESGTFSLRKL) are cytoplasmic. The chain crosses the membrane as a helical span at residues 56-73 (WAFTGPGFLMSIAFLDPG). The Extracellular portion of the chain corresponds to 74–82 (NIESDLQAG). A helical membrane pass occupies residues 83 to 102 (AVAGFKLLWVLLWATVLGLL). At 103-139 (CQRLAARLGVVTGKDLGEVCHLYYPKVPRILLWLTIE) the chain is on the cytoplasmic side. The helical transmembrane segment at 140–160 (LAIVGSDMQEVIGTAIAFSLL) threads the bilayer. At 161 to 164 (SAGR) the chain is on the extracellular side. The helical transmembrane segment at 165-184 (IPLWGGVLITVVDTFFFLFL) threads the bilayer. Topologically, residues 185 to 193 (DNYGLRKLE) are cytoplasmic. The chain crosses the membrane as a helical span at residues 194–214 (AFFGFLITIMALTFGYEYVVA). The Extracellular segment spans residues 215 to 237 (QPAQGALLQGLFLPSCPGCGQPE). The chain crosses the membrane as a helical span at residues 238–256 (LLQAVGIIGAIIMPHNIYL). The Cytoplasmic portion of the chain corresponds to 257 to 284 (HSSLVKSREVDRSRRADIREANMYFLIE). The chain crosses the membrane as a helical span at residues 285 to 304 (ATIALSVSFLINLFVMAVFG). Residues 305-346 (QAFYKQTNQAAFNICADSSLHDYAPIFPRNNLTVAVDIYQGG) lie on the Extracellular side of the membrane. The N-linked (GlcNAc...) asparagine glycan is linked to asparagine 335. Residues 347–366 (VILGCLFGPPALYIWAVGLL) traverse the membrane as a helical segment. At 367 to 397 (AAGQSSTMTGTYAGQFVMEGFLKLRWSRFAR) the chain is on the cytoplasmic side. Residues 398–415 (VLLTRSCAILPTVLLAVF) form a helical membrane-spanning segment. Residues 416 to 426 (RDLRDLSGLND) lie on the Extracellular side of the membrane. A helical transmembrane segment spans residues 427 to 447 (LLNVLQSLLLPFAVLPILTFT). Residues 448–463 (SMPALMQEFANGLVSK) lie on the Cytoplasmic side of the membrane. The chain crosses the membrane as a helical span at residues 464-485 (VITSSIMVLVCAVNLYFVISYL). Topologically, residues 486–493 (PSLPHPAY) are extracellular. Residues 494–513 (FSLVALLAAAYLGLTTYLVW) traverse the membrane as a helical segment. Topologically, residues 514–548 (TCLITQGATLLAHSSHQRFLYGLPEEDQEKGRTSG) are cytoplasmic.

It belongs to the NRAMP family.

It localises to the late endosome membrane. Its subcellular location is the lysosome membrane. The enzyme catalyses Zn(2+)(in) + H(+)(out) = Zn(2+)(out) + H(+)(in). It carries out the reaction Fe(2+)(in) + H(+)(out) = Fe(2+)(out) + H(+)(in). The catalysed reaction is Mn(2+)(in) + H(+)(out) = Mn(2+)(out) + H(+)(in). In terms of biological role, macrophage-specific antiporter that fluxes metal ions in either direction against a proton gradient. Localized to late endosomal lysosomal membranes, delivers bivalent cations from the cytosol into these acidic compartments where they may directly affect antimicrobial activity. Involved in iron metabolism and host natural resistance to infection with intracellular parasites. Pathogen resistance involves sequestration of Fe(2+) and Mn(2+), cofactors of both prokaryotic and eukaryotic catalases and superoxide dismutases, not only to protect the macrophage against its own generation of reactive oxygen species, but to deny the cations to the pathogen for synthesis of its protective enzymes. The polypeptide is Natural resistance-associated macrophage protein 1 (SLC11A1) (Bos taurus (Bovine)).